Consider the following 338-residue polypeptide: Phenylalanine--tRNA ligase alpha subunit (338 aa).

Glu-253 serves as a coordination point for Mg(2+).

Belongs to the class-II aminoacyl-tRNA synthetase family. Phe-tRNA synthetase alpha subunit type 1 subfamily. As to quaternary structure, tetramer of two alpha and two beta subunits. Requires Mg(2+) as cofactor.

The protein localises to the cytoplasm. It catalyses the reaction tRNA(Phe) + L-phenylalanine + ATP = L-phenylalanyl-tRNA(Phe) + AMP + diphosphate + H(+). The chain is Phenylalanine--tRNA ligase alpha subunit from Pelobacter propionicus (strain DSM 2379 / NBRC 103807 / OttBd1).